Here is a 195-residue protein sequence, read N- to C-terminus: Interferon tau-1 (195 aa).

Positions 1 to 23 (MAFVLSLLMALVLVSYGPGGSLG) are cleaved as a signal peptide. 2 disulfide bridges follow: Cys-24-Cys-122 and Cys-52-Cys-162.

The protein belongs to the alpha/beta interferon family. IFN-alphaII subfamily. In terms of tissue distribution, constitutively and exclusively expressed in the mononuclear cells of the extraembryonic trophectoderm.

The protein resides in the secreted. Functionally, paracrine hormone primarily responsible for maternal recognition of pregnancy. Interacts with endometrial receptors, probably type I interferon receptors, and blocks estrogen receptor expression, preventing the estrogen-induced increase in oxytocin receptor expression in the endometrium. This results in the suppression of the pulsatile endometrial release of the luteolytic hormone prostaglandin F2-alpha, hindering the regression of the corpus luteum (luteolysis) and therefore a return to ovarian cyclicity. This, and a possible direct effect of IFN-tau on prostaglandin synthesis, leads in turn to continued ovarian progesterone secretion, which stimulates the secretion by the endometrium of the nutrients required for the growth of the conceptus. In summary, displays particularly high antiviral and antiproliferative potency concurrently with particular weak cytotoxicity, high antiluteolytic activity and immunomodulatory properties. In contrast with other IFNs, IFN-tau is not virally inducible. This is Interferon tau-1 (IFNT1) from Ovis aries (Sheep).